The following is a 326-amino-acid chain: GDP-mannose transporter (326 aa).

Topologically, residues 1 to 4 (MEKS) are cytoplasmic. A helical transmembrane segment spans residues 5 to 25 (ITNSPVLSILSYCAASILMTV). Residues 26-35 (TNKYVLSGTS) lie on the Lumenal side of the membrane. A helical transmembrane segment spans residues 36-56 (FNLNLALLAVQSIVCLTAISI). Residues 57-74 (GKSFGLCKFRSFNADEAK) lie on the Cytoplasmic side of the membrane. Residues 75–97 (KWFPIALLLVVMIYTSSKALQFL) form a helical membrane-spanning segment. Over 98-100 (SIP) the chain is Lumenal. A helical transmembrane segment spans residues 101–123 (VYTIFKNLTIILIAYGEVLWFGG). Topologically, residues 124–129 (SVTSMA) are cytoplasmic. The helical transmembrane segment at 130 to 152 (LASFVLMVLSSVIAAWSDISGAI) threads the bilayer. Residues 153-163 (AVSGSATTTVT) lie on the Lumenal side of the membrane. A helical transmembrane segment spans residues 164–184 (ALNIGYFWMMSNCFASAAFVL). At 185 to 208 (YMRKRIKLTNFGDFDTTFYNNLLS) the chain is on the cytoplasmic side. Residues 209–229 (IPVLLIASLLFEDWSPANLAV) form a helical membrane-spanning segment. Over 230–237 (NFPPESRN) the chain is Lumenal. The helical transmembrane segment at 238-258 (LIFFSMVVSGLMSIGISYCSA) threads the bilayer. Over 259–268 (WCVRVTSSTT) the chain is Cytoplasmic. The helical transmembrane segment at 269–289 (YSMVGALNKLPLALSGIVFFG) threads the bilayer. Topologically, residues 290–291 (TP) are lumenal. The helical transmembrane segment at 292–312 (ATFSSVSAIFVGFVAGIVYAV) threads the bilayer. The Cytoplasmic segment spans residues 313–326 (AQIQKKKAEAALPK).

Belongs to the TPT transporter family. SLC35D subfamily. As to quaternary structure, homooligomer.

It is found in the golgi apparatus membrane. It localises to the cytoplasmic vesicle membrane. Its subcellular location is the endoplasmic reticulum membrane. Involved in the import of GDP-mannose from the cytoplasm into the Golgi lumen. The chain is GDP-mannose transporter (VRG4) from Yarrowia lipolytica (strain CLIB 122 / E 150) (Yeast).